Here is a 454-residue protein sequence, read N- to C-terminus: Tubulin beta-2 chain (454 aa).

GTP contacts are provided by Gln11, Glu69, Ser138, Gly142, Thr143, Gly144, Asn204, and Asn226. A Mg(2+)-binding site is contributed by Glu69. The disordered stretch occupies residues 426–454; sequence QEASVDDEAMEDDAEAEGGAGQNEAVEEF. Over residues 429-441 the composition is skewed to acidic residues; it reads SVDDEAMEDDAEA.

Belongs to the tubulin family. As to quaternary structure, dimer of alpha and beta chains. A typical microtubule is a hollow water-filled tube with an outer diameter of 25 nm and an inner diameter of 15 nM. Alpha-beta heterodimers associate head-to-tail to form protofilaments running lengthwise along the microtubule wall with the beta-tubulin subunit facing the microtubule plus end conferring a structural polarity. Microtubules usually have 13 protofilaments but different protofilament numbers can be found in some organisms and specialized cells. The cofactor is Mg(2+).

The protein localises to the cytoplasm. It localises to the cytoskeleton. It is found in the spindle. Its subcellular location is the nucleus. In terms of biological role, tubulin is the major constituent of microtubules, a cylinder consisting of laterally associated linear protofilaments composed of alpha- and beta-tubulin heterodimers. Microtubules grow by the addition of GTP-tubulin dimers to the microtubule end, where a stabilizing cap forms. Below the cap, tubulin dimers are in GDP-bound state, owing to GTPase activity of alpha-tubulin. This is the major beta tubulin of mitotic spindle. The chain is Tubulin beta-2 chain (BETC) from Physarum polycephalum (Slime mold).